The following is a 547-amino-acid chain: Chaperonin GroEL (547 aa).

Residues 30 to 33 (TLGP), Lys-51, 87 to 91 (DGTTT), Gly-415, and Asp-495 contribute to the ATP site.

Belongs to the chaperonin (HSP60) family. As to quaternary structure, forms a cylinder of 14 subunits composed of two heptameric rings stacked back-to-back. Interacts with the co-chaperonin GroES.

It is found in the cytoplasm. It carries out the reaction ATP + H2O + a folded polypeptide = ADP + phosphate + an unfolded polypeptide.. Together with its co-chaperonin GroES, plays an essential role in assisting protein folding. The GroEL-GroES system forms a nano-cage that allows encapsulation of the non-native substrate proteins and provides a physical environment optimized to promote and accelerate protein folding. The polypeptide is Chaperonin GroEL (Pasteurella multocida (strain Pm70)).